The primary structure comprises 819 residues: Tegument protein UL47 homolog (819 aa).

Over residues 1 to 15 the composition is skewed to basic residues; it reads MQSGHYNRRQSRRQR. Disordered stretches follow at residues 1–42 and 58–221; these read MQSG…THPP and LNSE…DYFS. Positions 11-31 match the Nuclear localization signal motif; that stretch reads SRRQRISSNTTDSPRHTHGTR. Over residues 32–42 the composition is skewed to polar residues; the sequence is YRSTNWYTHPP. Positions 62-72 are enriched in acidic residues; the sequence is MDQDSSSDASD. Positions 82-93 are enriched in polar residues; sequence STYNGSEQNTST. Basic and acidic residues predominate over residues 94–109; sequence SRHENRIFKLTEREAN. 5 consecutive repeat copies span residues 117–132, 133–148, 149–164, 165–190, and 191–206. Residues 117 to 218 form a 6 X 16 AA approximate tandem repeats region; the sequence is DAIDDEGEAE…IDDEGEAEED (102 aa). The segment covering 118-219 has biased composition (acidic residues); that stretch reads AIDDEGEAEE…DDEGEAEEDY (102 aa). A 1-6; truncated repeat occupies 207-218; it reads DAIDDEGEAEED. A Nuclear export signal motif is present at residues 785-807; sequence QPIPSVDLAENLMQYRNEILGLD.

It belongs to the alphaherpesvirinae HHV-1 UL47 family. Interacts with US3 kinase. Interacts with ORF24 and ORF27; these interactions seem important for efficient virion nuclear egress. Interacts with ORF17/VHS. Interacts with ORF9. Phosphorylated by US3. This phosphorylation is required for proper nuclear localization.

It is found in the virion tegument. Its subcellular location is the host nucleus. It localises to the host cytoplasm. Its function is as follows. Tegument protein that can bind to various RNA transcripts. Plays a role in the attenuation of selective viral and cellular mRNA degradation by modulating the activity of host shutoff RNase ORF17/VHS. Also plays a role in the primary envelopment of virions in the perinuclear space, probably by interacting with two nuclear egress proteins ORF24 and ORF27. This Varicella-zoster virus (strain Dumas) (HHV-3) protein is Tegument protein UL47 homolog.